The following is a 359-amino-acid chain: MGSGIEVNDSSTTNSNNNEKVQLSYNMKLALATGGIMGSFLLYGILQERLMVVPYKNADGSEEYFTDSTFLVLSNRVFAALMAIVIVLKRGESLKNVAPLHKYVGVALSNFCATWCQYEALKYVNFPTQTLGKCGKMLPVMLVGTFISGKKYGLKDYSIALTITTGCMIFFLTGKISNNESSNTSYGIILMALYMFFDSFTSTFQEKMFKGYTMSTYDQMIYVNGCSSIISVFILILNGRLFPAIEFISTHNGVFFDSTMLSASAGLGQMVIYYTIKEFGALVFSTIMVTRQMVSIILSTLIYLHPLSNTQWIGALLVFGTLYYKSIEDSKKKHGGHSHGGSNAATTTTPSNNSNNTEK.

7 helical membrane-spanning segments follow: residues asparagine 26–leucine 46, serine 68–leucine 88, tyrosine 157–serine 177, threonine 184–phenylalanine 204, serine 228–isoleucine 248, valine 254–isoleucine 276, and threonine 300–glycine 320. Residues lysine 332 to lysine 359 are disordered. Residues glycine 340–lysine 359 show a composition bias toward low complexity.

This sequence belongs to the nucleotide-sugar transporter family. SLC35B subfamily.

The protein localises to the golgi apparatus membrane. It catalyses the reaction 3'-phosphoadenylyl sulfate(in) + adenosine 3',5'-bisphosphate(out) = 3'-phosphoadenylyl sulfate(out) + adenosine 3',5'-bisphosphate(in). Probably functions as a 3'-phosphoadenylyl sulfate:adenosine 3',5'-bisphosphate antiporter at the Golgi membranes. Mediates the transport from the cytosol into the lumen of the Golgi of 3'-phosphoadenylyl sulfate/adenosine 3'-phospho 5'-phosphosulfate (PAPS), a universal sulfuryl donor for sulfation events that take place in that compartment. The chain is Adenosine 3'-phospho 5'-phosphosulfate transporter 1 (slc35b2) from Dictyostelium discoideum (Social amoeba).